The sequence spans 298 residues: Acetylglutamate kinase (298 aa).

Substrate is bound by residues 61 to 62 (GG), arginine 83, and asparagine 188.

It belongs to the acetylglutamate kinase family. ArgB subfamily.

It localises to the cytoplasm. The catalysed reaction is N-acetyl-L-glutamate + ATP = N-acetyl-L-glutamyl 5-phosphate + ADP. It participates in amino-acid biosynthesis; L-arginine biosynthesis; N(2)-acetyl-L-ornithine from L-glutamate: step 2/4. Its function is as follows. Catalyzes the ATP-dependent phosphorylation of N-acetyl-L-glutamate. In Syntrophobacter fumaroxidans (strain DSM 10017 / MPOB), this protein is Acetylglutamate kinase.